We begin with the raw amino-acid sequence, 3095 residues long: HD protein homolog (3095 aa).

Disordered regions lie at residues 105–197 (PHQH…NGNA), 536–561 (QQQQ…TMSG), 1312–1371 (PPQQ…STVI), 1509–1547 (KSTS…TTPS), and 2005–2037 (KELT…KEEE). A compositionally biased stretch (polar residues) spans 115–139 (STNLTDHLSQNSVTPSVPTTPNYQQ). Composition is skewed to low complexity over residues 140-197 (SPST…NGNA) and 536-551 (QQQQ…QQQQ). Residues 552–561 (HNLTSSTMSG) are compositionally biased toward polar residues. Composition is skewed to low complexity over residues 1315–1368 (QQQQ…LNNS), 1510–1547 (STSS…TTPS), and 2008–2018 (TNNNNNNNNNI).

Belongs to the huntingtin family.

It is found in the cytoplasm. The protein resides in the nucleus. May play a role in microtubule-mediated transport or vesicle function. This is HD protein homolog (htt) from Dictyostelium discoideum (Social amoeba).